The chain runs to 988 residues: Chitin synthase 1 (988 aa).

The tract at residues 29 to 75 (QHHWPPSSGSSLGRAPSIPLSSSNPRSPIRPSTPSRVSTDWTRPPAP) is disordered. Low complexity predominate over residues 44–66 (PSIPLSSSNPRSPIRPSTPSRVS). Transmembrane regions (helical) follow at residues 577 to 596 (WLNG…KQIW), 616 to 636 (FISL…FYFV), 656 to 676 (IFVI…ILSL), 732 to 752 (IFTN…LMSF), 764 to 784 (SAQY…YAFC), 864 to 884 (YVVA…SEAY), and 911 to 931 (AIGS…EGRI). Residues 950–988 (AGLGSGFSESGKTGITSGSGMSGMSLSDVTSKISEKLAG) are disordered. Low complexity predominate over residues 957-976 (SESGKTGITSGSGMSGMSLS).

Belongs to the chitin synthase family. Class II subfamily.

The protein resides in the cell membrane. It carries out the reaction [(1-&gt;4)-N-acetyl-beta-D-glucosaminyl](n) + UDP-N-acetyl-alpha-D-glucosamine = [(1-&gt;4)-N-acetyl-beta-D-glucosaminyl](n+1) + UDP + H(+). Functionally, polymerizes chitin, a structural polymer of the cell wall and septum, by transferring the sugar moiety of UDP-GlcNAc to the non-reducing end of the growing chitin polymer. CHS1 mainly responsible for normal yeast cell reproductive growth. The chain is Chitin synthase 1 from Exophiala dermatitidis (Black yeast-like fungus).